A 272-amino-acid polypeptide reads, in one-letter code: SPbeta prophage-derived aminoglycoside N(3')-acetyltransferase-like protein YokD (272 aa).

CoA is bound by residues 38–44 and glutamine 113; that span reads LSSIGWV.

This sequence belongs to the antibiotic N-acetyltransferase family. Homodimer.

Functionally, may contribute to antibiotic resistance. The polypeptide is SPbeta prophage-derived aminoglycoside N(3')-acetyltransferase-like protein YokD (yokD) (Bacillus subtilis (strain 168)).